Here is a 99-residue protein sequence, read N- to C-terminus: PE-PGRS family protein PE25 (99 aa).

The PE domain maps to 1–92; the sequence is MSFVITNPEA…GADKYATAEA (92 aa). An N-acetylserine modification is found at serine 2.

This sequence belongs to the mycobacterial PE family. In terms of assembly, forms a heterodimer with PPE41. The dimer forms a 1:1:1 heterotrimeric complex with EspG5. Interacts with PPE51.

The protein resides in the secreted. Functionally, the PE25/PPE41 dimer induces both a strong humoral and cellular immune response. PE25 protein alone induces low response. The dimer induces necrosis, but not apoptosis, in mouse macrophage cells. It also induces activation and maturation of mouse dendritic cells and drives Th2-biased immune responses. The protein is PE-PGRS family protein PE25 of Mycobacterium tuberculosis (strain ATCC 25618 / H37Rv).